The chain runs to 303 residues: Cobalamin biosynthesis protein CobD (303 aa).

Transmembrane regions (helical) follow at residues 65–85 (LLAWLLSLLPGIGWLAEIVLL), 147–167 (DAVFAALFWFIVAGAPGVVLY), 235–255 (AGPVMAAGAGALGVVLGGAAI), and 283–303 (LVWAGVGVWLLVLLFGGWLYA).

The protein belongs to the CobD/CbiB family.

It is found in the cell membrane. Its pathway is cofactor biosynthesis; adenosylcobalamin biosynthesis. Its function is as follows. Converts cobyric acid to cobinamide by the addition of aminopropanol on the F carboxylic group. This is Cobalamin biosynthesis protein CobD from Stutzerimonas stutzeri (strain A1501) (Pseudomonas stutzeri).